We begin with the raw amino-acid sequence, 597 residues long: Sodium/mannose cotransporter SLC5A10 (597 aa).

Residues 1-16 (MVADNSTSDPHAPGPQ) are Extracellular-facing. N-linked (GlcNAc...) asparagine glycosylation occurs at Asn5. Residues 17–37 (LSVTDIVVITVYFALNVAVGI) form a helical membrane-spanning segment. The Cytoplasmic segment spans residues 38–73 (WSSCRASRNTVSGYFLAGRDMTWWPIGASLFGSSEG). At Ser49 the chain carries Phosphoserine. A helical transmembrane segment spans residues 74–94 (SGLFIGLAGSGAAGGLAVAGF). The Extracellular segment spans residues 95–100 (DWNATY). Residues 101 to 121 (VLLALAWVFGAIYISSEIVTL) traverse the membrane as a helical segment. The Cytoplasmic portion of the chain corresponds to 122-137 (AEYIQKRFGGQRIRMY). Residues 138-158 (LSVLSLLLSVFTKISLDLYAG) form a helical membrane-spanning segment. The Extracellular segment spans residues 159–171 (ALFVHICLGWNFY). Residues 172 to 194 (LSTILTLTITALYTITGGLVAVI) form a helical membrane-spanning segment. The Cytoplasmic segment spans residues 195–200 (YTDALQ). Residues 201–219 (TLIMVVGAVILAIKAFHQI) form a helical membrane-spanning segment. Residues 220 to 265 (DGYGQMEAAYARAIPSRTVANTTCHLPRADAMHMFRDPYTGDLPWT) are Extracellular-facing. A helical transmembrane segment spans residues 266–286 (GMTFGLTIMATWYWCTDQVIV). At 287–301 (QRSLSARNLNHAKAG) the chain is on the cytoplasmic side. A helical transmembrane segment spans residues 302 to 322 (SILASYLKMLPMGLMIMPGMI). Topologically, residues 323-367 (SRALFPDEVGCVVPSECLRACGAEIGCSNIAYPKLVMELMPVGLR) are extracellular. Residues 368 to 390 (GLMIAVMMPALMSSLSSIFNSSS) traverse the membrane as a helical segment. At 391 to 410 (TLFTMDIWRRLRPCASEREL) the chain is on the cytoplasmic side. A helical membrane pass occupies residues 411–431 (LLVGRLVIVVLIGVSVAWIPV). Residues 432-444 (LQGSNGGQLFIYM) are Extracellular-facing. The helical transmembrane segment at 445–465 (QSVTSSLAPPVTAVFTLGIFW) threads the bilayer. Residues 466–472 (QRANEQG) lie on the Cytoplasmic side of the membrane. A helical membrane pass occupies residues 473 to 493 (AFWGLLAGLAVGATRLVLEFL). The Extracellular segment spans residues 494–514 (HPAPPCGAADTRPAVLSQLHY). The helical transmembrane segment at 515 to 535 (LHFAVALFVLTGAVAVGGSLL) threads the bilayer. The Cytoplasmic portion of the chain corresponds to 536-576 (TPPPRRHQIENLTWWTLTRDLSLGAKAGDGQTPQRYTFWAR). A helical transmembrane segment spans residues 577-597 (VCGFNAILLMCVNIFFYAYFA).

It belongs to the sodium:solute symporter (SSF) (TC 2.A.21) family. In terms of tissue distribution, expressed only in kidney.

It is found in the apical cell membrane. The enzyme catalyses D-mannose(out) + Na(+)(out) = D-mannose(in) + Na(+)(in). It catalyses the reaction D-fructopyranose(out) + Na(+)(out) = D-fructopyranose(in) + Na(+)(in). Electrogenic Na+-coupled sugar symporter that actively transports D-mannose or D-fructose at the plasma membrane, with a Na+ to sugar coupling ratio of 1:1. Transporter activity is driven by a transmembrane Na+ electrochemical gradient set by the Na+/K+ pump. Exclusively recognizes sugar substrates having a pyranose ring with an axial hydroxyl group on carbon 2. Has likely evolved to enable renal reabsorption of D-mannose, an important constituent of oligosaccharide chains of glycoproteins. Contributes to dietary D-fructose reabsorption from glomerular filtrate across the brush border of the kidney. This chain is Sodium/mannose cotransporter SLC5A10 (SLC5A10), found in Oryctolagus cuniculus (Rabbit).